The chain runs to 217 residues: UPF0111 protein MTH_1689 (217 aa).

Belongs to the UPF0111 family.

The chain is UPF0111 protein MTH_1689 from Methanothermobacter thermautotrophicus (strain ATCC 29096 / DSM 1053 / JCM 10044 / NBRC 100330 / Delta H) (Methanobacterium thermoautotrophicum).